A 361-amino-acid chain; its full sequence is S-adenosylmethionine:tRNA ribosyltransferase-isomerase (361 aa).

Belongs to the QueA family. In terms of assembly, monomer.

It is found in the cytoplasm. It catalyses the reaction 7-aminomethyl-7-carbaguanosine(34) in tRNA + S-adenosyl-L-methionine = epoxyqueuosine(34) in tRNA + adenine + L-methionine + 2 H(+). Its pathway is tRNA modification; tRNA-queuosine biosynthesis. Transfers and isomerizes the ribose moiety from AdoMet to the 7-aminomethyl group of 7-deazaguanine (preQ1-tRNA) to give epoxyqueuosine (oQ-tRNA). In Haemophilus ducreyi (strain 35000HP / ATCC 700724), this protein is S-adenosylmethionine:tRNA ribosyltransferase-isomerase.